Reading from the N-terminus, the 1138-residue chain is MKKFSRMPKSEGSGGGAAAGGAAGGGLGGGFASSSMGVRVFAVGRYQVTLEESLAEGGFSTVFLVRTHSGIRCALKRMYVNNTPDLNICKREITIMKELSGHKNIVGYLDCAVNSISDNVWEVLILMEYCRAGQVVNQMNKKLQTGFTESEVLQIFCDTCEAVARLHQCKTPIIHRDLKVENILLNDAGNYVLCDFGSATNKFLNPQKDGVNVVEEEIKKYTTLSYRAPEMINLYGGKPITTKADIWALGCLLYKLCFFTLPFGESQVAICDGSFTIPDNSRYSHNVHCLIRFMLEPDPECRPDIFQVSYFAFKFAKKDCPVSNINNSFLPSTLPEPMTATEAAARKSQMKARITDTIGPTETSIAPRQRPKANSTAATSSVLTIQSSATPVKVPAPGEFSNHKPKGALRPGNGSEVLMVQGPPQQPPQQHRVLQQLQQGDWRLQQLHLHRHPHHHHQQQQQQQQQQQQQQLQQQQQQQQQLLQNAYLQQYQHAMHQQHILQQQFLMHSVYQPQPPASQYPAMMQQYQQAFLQQQMLARHQQPAQQVSPEYLTSPQEFSPALVSYASSLPAQVGTIVDSSYGANRSVAEKEAVANFTNQKTISHPPDMSGWNPFGEDNFSKLTEEELLDREFDLLRSNRLGASTPSDKTVDLPPAPHSRPPEEPFASVPFISHSGSPEKKTTEHSPNQKSITANLTKNGGSSPLCKDQRAGKKTSENPVIRGQVQKGHDDSESDFESDPPSPKSSEEEQEDEDAQGEHGDFNDDDTEPENLGHRPLLMDSEDEEEDDKHSSDSECEQAKTKRGDTSSLRRDKPGVAPDTALLTPARSPADALTPSQEFDVFGAVPFFAAPAPQSLQHRGDGKNLSQHAFPEQEDFDVFTKAPFNKKVSVQDWPAVGPDARPLPARPRSVDIFGSTPFQPFSVSASKSESKEDVFGLVPFEEITGSQQQQKVKQRSLQKLSSRQRRTKQDVSKSNGKRHHGTPTSAKKTLKPPYRTPERARRHKKVGRRDSQSSNEFLTISDSKENISVALTDGKDRASVLPSDESLLDPFGAKPFHPPDLWHQPHQGLSDICVDHTTILPGRPRQNSVHGSFHSAETLRMDDFGAVPFTELVVQSVTPQQSQPVELDPFGAAPFPSKQ.

Position 13 is a phosphoserine (S13). The 266-residue stretch at 48–313 (VTLEESLAEG…DIFQVSYFAF (266 aa)) folds into the Protein kinase domain. ATP-binding positions include 54 to 62 (LAEGGFSTV) and K76. Catalysis depends on D177, which acts as the Proton acceptor. Disordered stretches follow at residues 355–435 (TDTI…RVLQ), 638–831 (NRLG…PADA), and 906–1018 (PRSV…EFLT). Positions 358–390 (IGPTETSIAPRQRPKANSTAATSSVLTIQSSAT) are enriched in polar residues. The span at 417 to 435 (VLMVQGPPQQPPQQHRVLQ) shows a compositional bias: low complexity. S676 is modified (phosphoserine). Polar residues predominate over residues 684–701 (HSPNQKSITANLTKNGGS). Basic and acidic residues predominate over residues 706–715 (KDQRAGKKTS). 3 positions are modified to phosphoserine: S733, S806, and S807. Over residues 787 to 813 (DKHSSDSECEQAKTKRGDTSSLRRDKP) the composition is skewed to basic and acidic residues. At T819 the chain carries Phosphothreonine. S908 is subject to Phosphoserine. A compositionally biased stretch (polar residues) spans 915–926 (TPFQPFSVSASK). Basic residues predominate over residues 951–965 (VKQRSLQKLSSRQRR). Phosphoserine is present on residues S1010, S1012, S1013, S1020, S1022, S1087, and S1091. The segment at 1117–1138 (TPQQSQPVELDPFGAAPFPSKQ) is disordered.

This sequence belongs to the protein kinase superfamily. Ser/Thr protein kinase family. In terms of processing, autophosphorylated. In terms of tissue distribution, expressed in osteocytes and osteoblasts.

It is found in the nucleus. It carries out the reaction L-seryl-[protein] + ATP = O-phospho-L-seryl-[protein] + ADP + H(+). The catalysed reaction is L-threonyl-[protein] + ATP = O-phospho-L-threonyl-[protein] + ADP + H(+). Its function is as follows. May be involved in osteoblast differentiation. This chain is BMP-2-inducible protein kinase (Bmp2k), found in Mus musculus (Mouse).